The sequence spans 351 residues: SLAM family member 6 (351 aa).

Residues 1-30 (MAVSRAPAPDSACQRMVWLFPLVFCLGSGS) form the signal peptide. The Extracellular portion of the chain corresponds to 31-239 (EVSQSSSDPQ…KGVLTNPPWN (209 aa)). The 95-residue stretch at 36-130 (SSDPQLMNGV…YTAQITTKDS (95 aa)) folds into the Ig-like V-type domain. 9 N-linked (GlcNAc...) asparagine glycosylation sites follow: Asn-82, Asn-101, Asn-112, Asn-152, Asn-159, Asn-172, Asn-186, Asn-193, and Asn-218. One can recognise an Ig-like C2-type domain in the interval 147 to 210 (NLETTNYTLL…RNSGDQTYVC (64 aa)). Disulfide bonds link Cys-162–Cys-229 and Cys-168–Cys-210. Residues 240-262 (AVWFMTTISIISAVILIFVCWSI) traverse the membrane as a helical segment. Over 263–351 (HVWKRRGSLP…KVNTLINYNS (89 aa)) the chain is Cytoplasmic. The interval 272–295 (PLTSQHPESSQSTDGPGSPGNTVY) is disordered. Short sequence motifs (ITSM) lie at residues 293–298 (TVYAQV) and 317–322 (TIYSIV). Tyr-319 is subject to Phosphotyrosine.

As to quaternary structure, homodimer. Interacts with PTN6 and, upon phosphorylation, with PTN11 and SH2D1A/SAP. In terms of processing, phosphorylated. In terms of tissue distribution, expressed on hematopoietic cells. Isoform 3 is expressed in thymocytes and B lymphocytes of C57Bl/6 strain.

It is found in the cell membrane. Self-ligand receptor of the signaling lymphocytic activation molecule (SLAM) family. SLAM receptors triggered by homo- or heterotypic cell-cell interactions are modulating the activation and differentiation of a wide variety of immune cells and thus are involved in the regulation and interconnection of both innate and adaptive immune response. Activities are controlled by presence or absence of small cytoplasmic adapter proteins, SH2D1A/SAP and/or SH2D1B/EAT-2. Triggers cytolytic activity only in natural killer cells (NK) expressing high surface densities of natural cytotoxicity receptors. Positive signaling in NK cells implicates phosphorylation of VAV1. NK cell activation seems to depend on SH2D1B and not on SH2D1A. In conjunction with SLAMF1 controls the transition between positive selection and the subsequent expansion and differentiation of the thymocytic natural killer T (NKT) cell lineage. Promotes T cell differentiation into a helper T-cell Th17 phenotype leading to increased IL-17 secretion; the costimulatory activity requires SH2D1A. Promotes recruitment of RORC to the IL-17 promoter. In conjunction with SLAMF1 and CD84/SLAMF5 may be a negative regulator of the humoral immune response. In the absence of SH2D1A/SAP can transmit negative signals to CD4(+) T-cells and NKT cells. Negatively regulates germinal center formation by inhibiting T-cell:B-cell adhesion; the function probably implicates increased association with PTPN6/SHP-1 via ITSMs in absence of SH2D1A/SAP. However, reported to mediated T-cell adhesion, to participate in stable T-cell:B-cell interactions and to be involved in maintaining B-cell tolerance in germinal centers and in preventing autoimmunity. Involved in regulation of autoimmunity. Isoform 3 may be suppressor of pathogenic T-cell proliferation. The chain is SLAM family member 6 (Slamf6) from Mus musculus (Mouse).